An 86-amino-acid chain; its full sequence is Probable weak neurotoxin NNAM2I (86 aa).

Residues 1-21 (MKTLPLTLVVVTIVCLDLGYT) form the signal peptide. 5 disulfides stabilise this stretch: cysteine 24–cysteine 45, cysteine 27–cysteine 32, cysteine 38–cysteine 63, cysteine 67–cysteine 78, and cysteine 79–cysteine 84.

This sequence belongs to the three-finger toxin family. Ancestral subfamily. Orphan group II sub-subfamily. Expressed by the venom gland.

It is found in the secreted. In terms of biological role, binds with low affinity to muscular (alpha-1-beta-1-delta-epsilon/CHRNA1-CHRNB1-CHRND-CHRNE) and very low affinity to neuronal (alpha-7/CHRNA7) nicotinic acetylcholine receptor (nAChR). The protein is Probable weak neurotoxin NNAM2I of Naja atra (Chinese cobra).